Here is a 404-residue protein sequence, read N- to C-terminus: MTHDLAASGLRFGIEEEFFLLDASDLDIVRSAPAGFVAACRDTLGEHFAEEMFECQVEVASPVFSTLAEAARFHGQARQRLAHLAMDFGLRSLCVGTHPFADWRRARSNPAAHFARLFEDQGRVARRSLVCGLHVHVEIPPSHDRMAVLQRVLPWLPLLLALSASSPFRGGRRSGLASYRRALCGEWPRMNIPPALPDEDAYRRHLALLREAGCIREDGQVWWMIRPSSHVPTLELRICDACPRLADALSLAGLFRALVGEALGAGPRTLPVARDACLEENYWQALRYGCAGRYLVGGRAVGAGDWLEMAWRQCRPQARQGNEWAYEHARGLLGETSASRQLRRYQTLRAAGQERHVALRRLVEELLEENLQPALAGPAGKRAHEGGRSFRPAAGAPMSIRGQE.

The segment at 377 to 404 (GPAGKRAHEGGRSFRPAAGAPMSIRGQE) is disordered.

It belongs to the glutamate--cysteine ligase type 2 family. YbdK subfamily.

The enzyme catalyses L-cysteine + L-glutamate + ATP = gamma-L-glutamyl-L-cysteine + ADP + phosphate + H(+). ATP-dependent carboxylate-amine ligase which exhibits weak glutamate--cysteine ligase activity. In Pseudomonas aeruginosa (strain UCBPP-PA14), this protein is Putative glutamate--cysteine ligase 2.